Here is a 355-residue protein sequence, read N- to C-terminus: UDP-N-acetylglucosamine--N-acetylmuramyl-(pentapeptide) pyrophosphoryl-undecaprenol N-acetylglucosamine transferase (355 aa).

Residues Thr-15 to Gly-17, Asn-127, Arg-163, Ser-191, Ile-244, Ala-263 to Glu-268, and Gln-288 contribute to the UDP-N-acetyl-alpha-D-glucosamine site.

It belongs to the glycosyltransferase 28 family. MurG subfamily.

The protein localises to the cell inner membrane. The enzyme catalyses di-trans,octa-cis-undecaprenyl diphospho-N-acetyl-alpha-D-muramoyl-L-alanyl-D-glutamyl-meso-2,6-diaminopimeloyl-D-alanyl-D-alanine + UDP-N-acetyl-alpha-D-glucosamine = di-trans,octa-cis-undecaprenyl diphospho-[N-acetyl-alpha-D-glucosaminyl-(1-&gt;4)]-N-acetyl-alpha-D-muramoyl-L-alanyl-D-glutamyl-meso-2,6-diaminopimeloyl-D-alanyl-D-alanine + UDP + H(+). It participates in cell wall biogenesis; peptidoglycan biosynthesis. Cell wall formation. Catalyzes the transfer of a GlcNAc subunit on undecaprenyl-pyrophosphoryl-MurNAc-pentapeptide (lipid intermediate I) to form undecaprenyl-pyrophosphoryl-MurNAc-(pentapeptide)GlcNAc (lipid intermediate II). In Sodalis glossinidius (strain morsitans), this protein is UDP-N-acetylglucosamine--N-acetylmuramyl-(pentapeptide) pyrophosphoryl-undecaprenol N-acetylglucosamine transferase.